A 777-amino-acid chain; its full sequence is Endonuclease MutS2 (777 aa).

328-335 serves as a coordination point for ATP; that stretch reads GPNTGGKT. Positions 702–777 constitute a Smr domain; sequence LDLRGKRYEE…GSGATIVIFK (76 aa).

Belongs to the DNA mismatch repair MutS family. MutS2 subfamily. Homodimer. Binds to stalled ribosomes, contacting rRNA.

Endonuclease that is involved in the suppression of homologous recombination and thus may have a key role in the control of bacterial genetic diversity. In terms of biological role, acts as a ribosome collision sensor, splitting the ribosome into its 2 subunits. Detects stalled/collided 70S ribosomes which it binds and splits by an ATP-hydrolysis driven conformational change. Acts upstream of the ribosome quality control system (RQC), a ribosome-associated complex that mediates the extraction of incompletely synthesized nascent chains from stalled ribosomes and their subsequent degradation. Probably generates substrates for RQC. This chain is Endonuclease MutS2, found in Streptococcus gordonii (strain Challis / ATCC 35105 / BCRC 15272 / CH1 / DL1 / V288).